A 72-amino-acid chain; its full sequence is Prokaryotic ubiquitin-like protein Pup (72 aa).

Positions 1 to 10 (MATKDTGGGQ) are enriched in gly residues. Residues 1–45 (MATKDTGGGQQKATRSTEEVEEQAQDAQASEDLKERQEKLSDDVD) are disordered. Residues 10–60 (QQKATRSTEEVEEQAQDAQASEDLKERQEKLSDDVDSVLDEIDDVLEENAE) are a coiled coil. The ARC ATPase binding stretch occupies residues 28-66 (QASEDLKERQEKLSDDVDSVLDEIDDVLEENAEDFVRSF). Residues 31 to 42 (EDLKERQEKLSD) show a composition bias toward basic and acidic residues. Glu72 is covalently cross-linked (Isoglutamyl lysine isopeptide (Glu-Lys) (interchain with K-? in acceptor proteins)).

It belongs to the prokaryotic ubiquitin-like protein family. In terms of assembly, strongly interacts with the proteasome-associated ATPase ARC through a hydrophobic interface; the interacting region of Pup lies in its C-terminal half. There is one Pup binding site per ARC hexamer ring.

It participates in protein degradation; proteasomal Pup-dependent pathway. Functionally, protein modifier that is covalently attached to lysine residues of substrate proteins, thereby targeting them for proteasomal degradation. The tagging system is termed pupylation. The chain is Prokaryotic ubiquitin-like protein Pup from Streptomyces coelicolor (strain ATCC BAA-471 / A3(2) / M145).